The sequence spans 212 residues: Peptide methionine sulfoxide reductase MsrA (212 aa).

The active site involves Cys-52.

The protein belongs to the MsrA Met sulfoxide reductase family.

It catalyses the reaction L-methionyl-[protein] + [thioredoxin]-disulfide + H2O = L-methionyl-(S)-S-oxide-[protein] + [thioredoxin]-dithiol. The enzyme catalyses [thioredoxin]-disulfide + L-methionine + H2O = L-methionine (S)-S-oxide + [thioredoxin]-dithiol. Has an important function as a repair enzyme for proteins that have been inactivated by oxidation. Catalyzes the reversible oxidation-reduction of methionine sulfoxide in proteins to methionine. In Salmonella schwarzengrund (strain CVM19633), this protein is Peptide methionine sulfoxide reductase MsrA.